Reading from the N-terminus, the 656-residue chain is CoB--CoM heterodisulfide reductase iron-sulfur subunit A 2 (656 aa).

152-175 (GGGVSGIQAALDLADMGFEVILVE) provides a ligand contact to FAD. 4Fe-4S ferredoxin-type domains are found at residues 238 to 269 (KKPRYVDEDACTGCGACAEVCPIEVPNEFDEG), 286 to 315 (SVFTIDEEHCIRCGLCEEVCDADAIDFDQE), 577 to 606 (IVSEVDEEICGGCGTCVELCPYGAIELVEK), and 610 to 639 (LVAEVTAALCKGCGTCAAACPSGAMEQNHF). Residues Cys-248, Cys-251, Cys-254, Cys-258, Cys-295, Cys-298, Cys-301, Cys-305, Cys-586, Cys-589, Cys-592, Cys-596, Cys-619, Cys-622, Cys-625, and Cys-629 each contribute to the [4Fe-4S] cluster site.

The protein belongs to the HdrA family. As to quaternary structure, the ferredoxin:CoB-CoM heterodisulfide reductase is composed of three subunits; HdrA, HdrB and HdrC. Requires [4Fe-4S] cluster as cofactor. It depends on FAD as a cofactor.

Its pathway is cofactor metabolism; coenzyme M-coenzyme B heterodisulfide reduction; coenzyme B and coenzyme M from coenzyme M-coenzyme B heterodisulfide: step 1/1. Functionally, part of a complex that catalyzes the reversible reduction of CoM-S-S-CoB to the thiol-coenzymes H-S-CoM (coenzyme M) and H-S-CoB (coenzyme B). The sequence is that of CoB--CoM heterodisulfide reductase iron-sulfur subunit A 2 (hdrA2) from Methanopyrus kandleri (strain AV19 / DSM 6324 / JCM 9639 / NBRC 100938).